A 306-amino-acid chain; its full sequence is Ciliary microtubule inner protein 2B (306 aa).

A disordered region spans residues 61-92 (QSNPFPPPRDHSFDGGSQELGGRRQHPGDPNL).

It belongs to the CIMIP2 family. In terms of tissue distribution, expressed in airway epithelial cells.

Its subcellular location is the cytoplasm. The protein resides in the cytoskeleton. It is found in the cilium axoneme. Functionally, microtubule inner protein (MIP) part of the dynein-decorated doublet microtubules (DMTs) in cilia axoneme, which is required for motile cilia beating. The polypeptide is Ciliary microtubule inner protein 2B (cimip2b) (Xenopus tropicalis (Western clawed frog)).